Here is a 401-residue protein sequence, read N- to C-terminus: E3 ubiquitin-protein ligase NHLRC1 (401 aa).

The RING-type zinc finger occupies C28–R74. NHL repeat units follow at residues T115 to G159, A163 to F206, G207 to D247, E250 to T303, M304 to P352, and E353 to M396.

As to quaternary structure, interacts with AGL. Interacts (via the NHL repeats) with EPM2A/laforin. Forms a complex with EPM2A/laforin and HSP70. Interacts with PRDM8.

It localises to the endoplasmic reticulum. It is found in the nucleus. The catalysed reaction is S-ubiquitinyl-[E2 ubiquitin-conjugating enzyme]-L-cysteine + [acceptor protein]-L-lysine = [E2 ubiquitin-conjugating enzyme]-L-cysteine + N(6)-ubiquitinyl-[acceptor protein]-L-lysine.. It functions in the pathway protein modification; protein ubiquitination. In terms of biological role, E3 ubiquitin-protein ligase. Together with the phosphatase EPM2A/laforin, appears to be involved in the clearance of toxic polyglucosan and protein aggregates via multiple pathways. In complex with EPM2A/laforin and HSP70, suppresses the cellular toxicity of misfolded proteins by promoting their degradation through the ubiquitin-proteasome system (UPS). Ubiquitinates the glycogen-targeting protein phosphatase subunits PPP1R3C/PTG and PPP1R3D in a laforin-dependent manner and targets them for proteasome-dependent degradation, thus decreasing glycogen accumulation. Polyubiquitinates EPM2A/laforin and ubiquitinates AGL and targets them for proteasome-dependent degradation. Also promotes proteasome-independent protein degradation through the macroautophagy pathway. This chain is E3 ubiquitin-protein ligase NHLRC1 (Nhlrc1), found in Mus musculus (Mouse).